The primary structure comprises 70 residues: Antimicrobial peptide VpCT1 (70 aa).

Positions 1-23 (MKNQFAVLLVALVLLQLFSQSEA) are cleaved as a signal peptide. Leucine amide is present on L36. Residues 37 to 70 (GKRGLRNFDLEQMDDTYEPELSEADLRYLQDLLR) constitute a propeptide that is removed on maturation.

The protein belongs to the non-disulfide-bridged peptide (NDBP) superfamily. Short antimicrobial peptide (group 4) family. Expressed by the venom gland.

It localises to the secreted. Its subcellular location is the target cell membrane. Antimicrobial peptide with potent activity against bacteria S.aureus (MIC=4.7 uM) and E.coli (MIC=31.5 uM), and pathogenic yeasts C.albicans (MIC=25 uM) and C.glabrata (MIC=12.5 uM). Is not very effective against P.aeruginosa (MIC=150 and &gt;300 uM). Also provokes moderate hemolysis on human erythrocytes (HC(50)=10.5 uM). This is Antimicrobial peptide VpCT1 from Mesomexovis punctatus (Scorpion).